Here is a 295-residue protein sequence, read N- to C-terminus: Nucleotide-binding protein Lxx11490 (295 aa).

Residue 19–26 coordinates ATP; it reads GMSGAGRS. 70–73 is a GTP binding site; that stretch reads DVRG.

This sequence belongs to the RapZ-like family.

Its function is as follows. Displays ATPase and GTPase activities. This is Nucleotide-binding protein Lxx11490 from Leifsonia xyli subsp. xyli (strain CTCB07).